The sequence spans 295 residues: Ribosomal protein L11 methyltransferase (295 aa).

Residues Thr-150, Gly-171, Asp-193, and Asn-232 each contribute to the S-adenosyl-L-methionine site.

Belongs to the methyltransferase superfamily. PrmA family.

The protein localises to the cytoplasm. It carries out the reaction L-lysyl-[protein] + 3 S-adenosyl-L-methionine = N(6),N(6),N(6)-trimethyl-L-lysyl-[protein] + 3 S-adenosyl-L-homocysteine + 3 H(+). Methylates ribosomal protein L11. The polypeptide is Ribosomal protein L11 methyltransferase (Methylobacillus flagellatus (strain ATCC 51484 / DSM 6875 / VKM B-1610 / KT)).